Here is a 189-residue protein sequence, read N- to C-terminus: Phosphoheptose isomerase (189 aa).

One can recognise an SIS domain in the interval 34 to 189 (VADTLKNGKK…CQAVDEAFRG (156 aa)). 49-51 (NGG) lines the substrate pocket. His-58 and Glu-62 together coordinate Zn(2+). Substrate contacts are provided by residues Glu-62, 91–92 (ND), 117–119 (STS), Ser-122, and Gln-169. Residues Gln-169 and His-177 each coordinate Zn(2+).

Belongs to the SIS family. GmhA subfamily. As to quaternary structure, homotetramer. The cofactor is Zn(2+).

The protein resides in the cytoplasm. The catalysed reaction is 2 D-sedoheptulose 7-phosphate = D-glycero-alpha-D-manno-heptose 7-phosphate + D-glycero-beta-D-manno-heptose 7-phosphate. The protein operates within carbohydrate biosynthesis; D-glycero-D-manno-heptose 7-phosphate biosynthesis; D-glycero-alpha-D-manno-heptose 7-phosphate and D-glycero-beta-D-manno-heptose 7-phosphate from sedoheptulose 7-phosphate: step 1/1. Functionally, catalyzes the isomerization of sedoheptulose 7-phosphate in D-glycero-D-manno-heptose 7-phosphate. The protein is Phosphoheptose isomerase of Campylobacter concisus (strain 13826).